The sequence spans 265 residues: Probable aquaporin TIP3-2 (265 aa).

Helical transmembrane passes span 32–52 (LSEF…VYGL) and 62–82 (LGGL…AVAV). An NPA 1 motif is present at residues 92–94 (NPA). Transmembrane regions (helical) follow at residues 110 to 130 (AALY…LLRL), 151 to 171 (ALLL…ATAV), and 179 to 199 (DIAP…GGPF). The NPA 2 motif lies at 205–207 (NPA). Residues 223–243 (WVYWLGPLIGAGMAGALYEFV) form a helical membrane-spanning segment.

The protein belongs to the MIP/aquaporin (TC 1.A.8) family. TIP (TC 1.A.8.10) subfamily. As to expression, expressed in leaves and at lower levels in roots.

The protein localises to the vacuole membrane. In terms of biological role, aquaporins facilitate the transport of water and small neutral solutes across cell membranes. May be involved in transport from the vacuolar compartment to the cytoplasm. In Oryza sativa subsp. japonica (Rice), this protein is Probable aquaporin TIP3-2 (TIP3-2).